Consider the following 1737-residue polypeptide: Intraflagellar transport protein osm-1 (1737 aa).

WD repeat units lie at residues 14 to 53, 63 to 103, 110 to 150, 151 to 189, 191 to 229, 233 to 273, and 511 to 553; these read DGEAKISNISCSPNGSRAAIACSDRSVALLDENGVQKDRF, GKKS…NEKK, VQPS…SLYK, TDETVVSIQTHPKRTSFVSAHQDGSIILYNFSSRTQSKI, TLQVPPYNLVFTNHGLVVATSDRRVLSYTENGVVQQQFD, QSEK…WDEG, and DQRS…EQVT. TPR repeat units lie at residues 700–737, 803–836, 848–881, 907–940, 979–1012, 1037–1070, and 1137–1170; these read NDTESAIGMYTSLHKWDEALELAKVLNYPEYEQLKTSY, SQLYDKAGDVYEKLKDFDKAVEYFKKGDAYGKAI, VTLEQEWGLHLEYIGQYDAAVNHFVEANDLKKAV, TGYYGEIADHYSNKGDFERAERLFVEAGLFNDAI, HGRFAEAEQLYITIGMPHKAIQMYDRVGRDDDVL, RGDLKAAEEQFLKAGDFRSAVNMYKDSEMWSDAY, and GTVHVRLATQLEEEGRLEDASKHYVEGNKPELAV.

It belongs to the IFT172 family. As to quaternary structure, component of the IFT complex B composed of at least che-2, che-13, dyf-1, dyf-3, dyf-6, dyf-11, dyf-13, ift-20, ift-74, ift-81, ifta-2, osm-1, osm-5 and osm-6. As to expression, expressed in amphid and phasmid chemosensory neurons, where it appears to concentrate at the base of the transition zones, which correspond to the basal bodies of motile and sensory cilia. Moves in the retrograde direction along cilia and dendrites, suggesting that it is retrieved from the distal endings of the cilia by a retrograde transport pathway that moves it along cilia and then dendrites, back to the neuronal cell body.

The protein localises to the cell projection. Its subcellular location is the cilium. Functionally, component of the intraflagellar transport (IFT) complex B required for transport of proteins in the motile cilium. May be required for ciliary entrance and transport of specific ciliary cargo proteins such as che-3 which are related to motility. Required for the maintenance and formation of chemosensory cilia that detect chemosensory cues. In Caenorhabditis elegans, this protein is Intraflagellar transport protein osm-1.